A 905-amino-acid chain; its full sequence is Clumping factor B (905 aa).

An N-terminal signal peptide occupies residues 1–44; it reads MKKRIDYLSNKQNKYSIRRFTVGTTSVIVGATILFGIGNHQAQA. Positions 15–26 match the YSIRK-G/S signaling motif motif; that stretch reads YSIRRFTVGTTS. Polar residues-rich tracts occupy residues 44–61 and 68–101; these read ASEQ…NASA and MIET…KPMS. The segment at 44–191 is disordered; it reads ASEQSNDTTQ…AQGTSKPSVR (148 aa). The segment at 45-542 is ligand binding A region; that stretch reads SEQSNDTTQS…GSADGDSAVN (498 aa). Over residues 102–119 the composition is skewed to low complexity; sequence TQTSNTTTTEPASTNETP. The span at 134 to 189 shows a compositional bias: polar residues; the sequence is QDQTVPQEANSQVDNKTTNDANSIATNSELKNPQTLDLPQSSPQTISNAQGTSKPS. The MIDAS-like motif signature appears at 272–276; sequence DYSNS. The segment at 530–877 is disordered; that stretch reads YGGGSADGDS…ETGDKSENTN (348 aa). The span at 545–555 shows a compositional bias: pro residues; it reads DPTPGPPVDPE. Over residues 556–829 the composition is skewed to acidic residues; the sequence is PSPDPEPEPS…SDSDSDSDSD (274 aa). Over residues 833 to 844 the composition is skewed to polar residues; it reads RVTPPNNEQKAP. Residues 861–874 show a composition bias toward basic and acidic residues; the sequence is HKTDALPETGDKSE. The LPXTG sorting signal motif lies at 866–870; sequence LPETG. The residue at position 869 (Thr869) is a Pentaglycyl murein peptidoglycan amidated threonine. Positions 870 to 905 are cleaved as a propeptide — removed by sortase; the sequence is GDKSENTNATLFGAMMALLGSLLLFRKRKQDHKEKA.

It belongs to the serine-aspartate repeat-containing protein (SDr) family. Post-translationally, proteolytically cleaved by aureolysin (aur). This cleavage leads to the inactivation of ClfB.

It localises to the secreted. The protein localises to the cell wall. Cell surface-associated protein implicated in virulence by promoting bacterial attachment to both alpha- and beta-chains of human fibrinogen and inducing the formation of bacterial clumps. In Staphylococcus aureus (strain MSSA476), this protein is Clumping factor B (clfB).